The following is a 208-amino-acid chain: Protein GrpE (208 aa).

Residues 1-25 are compositionally biased toward basic and acidic residues; that stretch reads MVDNKDFNEELKENIQEELDNETKA. A disordered region spans residues 1-38; that stretch reads MVDNKDFNEELKENIQEELDNETKAENPNIDEEVEEVS. Positions 29–38 are enriched in acidic residues; it reads NIDEEVEEVS.

This sequence belongs to the GrpE family. As to quaternary structure, homodimer.

It localises to the cytoplasm. Functionally, participates actively in the response to hyperosmotic and heat shock by preventing the aggregation of stress-denatured proteins, in association with DnaK and GrpE. It is the nucleotide exchange factor for DnaK and may function as a thermosensor. Unfolded proteins bind initially to DnaJ; upon interaction with the DnaJ-bound protein, DnaK hydrolyzes its bound ATP, resulting in the formation of a stable complex. GrpE releases ADP from DnaK; ATP binding to DnaK triggers the release of the substrate protein, thus completing the reaction cycle. Several rounds of ATP-dependent interactions between DnaJ, DnaK and GrpE are required for fully efficient folding. The polypeptide is Protein GrpE (Clostridium perfringens (strain ATCC 13124 / DSM 756 / JCM 1290 / NCIMB 6125 / NCTC 8237 / Type A)).